A 1072-amino-acid polypeptide reads, in one-letter code: DNA-directed RNA polymerase subunit beta (1072 aa).

Belongs to the RNA polymerase beta chain family. As to quaternary structure, in plastids the minimal PEP RNA polymerase catalytic core is composed of four subunits: alpha, beta, beta', and beta''. When a (nuclear-encoded) sigma factor is associated with the core the holoenzyme is formed, which can initiate transcription.

Its subcellular location is the plastid. The protein resides in the chloroplast. It catalyses the reaction RNA(n) + a ribonucleoside 5'-triphosphate = RNA(n+1) + diphosphate. DNA-dependent RNA polymerase catalyzes the transcription of DNA into RNA using the four ribonucleoside triphosphates as substrates. This chain is DNA-directed RNA polymerase subunit beta, found in Barbarea verna (Land cress).